A 213-amino-acid chain; its full sequence is Retinitis pigmentosa 9 protein homolog (213 aa).

Residues 1 to 61 (MSSGAGSRRP…IKEDETKPED (61 aa)) are disordered. The PIM1-binding stretch occupies residues 1–147 (MSSGAGSRRP…RENKRHEKDV (147 aa)). Composition is skewed to basic and acidic residues over residues 9–21 (RPREPPEHELQRR) and 52–61 (IKEDETKPED). Residues 96–114 (QCWRCKRYGHRTGDKECPF) form a CCHC-type zinc finger. Lys121 is covalently cross-linked (Glycyl lysine isopeptide (Lys-Gly) (interchain with G-Cter in SUMO2)). The tract at residues 154–213 (QLLEDSTSDDDGSSSSSSGDREKRKKRKKKEKHKKRKKEKKKKKKRKHKASKSSESSDSE) is disordered. Residues 176–204 (KRKKRKKKEKHKKRKKEKKKKKKRKHKAS) show a composition bias toward basic residues. Residues Ser204 and Ser206 each carry the phosphoserine; by PIM1; in vitro modification.

In terms of assembly, binds to PIM1. Binds to ZNHIT4. Highly expressed in the testis, moderately in the kidney, liver and spleen, and weakly in the skeletal muscle and heart.

The protein resides in the nucleus. Is thought to be a target protein for the PIM1 kinase. May play some roles in B-cell proliferation in association with PIM1. The sequence is that of Retinitis pigmentosa 9 protein homolog (rp9) from Mus musculus (Mouse).